The chain runs to 295 residues: Urease accessory protein UreD (295 aa).

It belongs to the UreD family. In terms of assembly, ureD, UreF and UreG form a complex that acts as a GTP-hydrolysis-dependent molecular chaperone, activating the urease apoprotein by helping to assemble the nickel containing metallocenter of UreC. The UreE protein probably delivers the nickel.

The protein localises to the cytoplasm. Functionally, required for maturation of urease via the functional incorporation of the urease nickel metallocenter. The protein is Urease accessory protein UreD of Ralstonia nicotianae (strain ATCC BAA-1114 / GMI1000) (Ralstonia solanacearum).